The chain runs to 231 residues: 7-cyano-7-deazaguanine synthase (231 aa).

8–18 (FSGGQDSTTCL) is a binding site for ATP. Cys-188, Cys-197, Cys-200, and Cys-203 together coordinate Zn(2+).

It belongs to the QueC family. Zn(2+) is required as a cofactor.

The catalysed reaction is 7-carboxy-7-deazaguanine + NH4(+) + ATP = 7-cyano-7-deazaguanine + ADP + phosphate + H2O + H(+). It participates in purine metabolism; 7-cyano-7-deazaguanine biosynthesis. Catalyzes the ATP-dependent conversion of 7-carboxy-7-deazaguanine (CDG) to 7-cyano-7-deazaguanine (preQ(0)). The protein is 7-cyano-7-deazaguanine synthase of Escherichia coli O127:H6 (strain E2348/69 / EPEC).